We begin with the raw amino-acid sequence, 377 residues long: Aspartate aminotransferase (377 aa).

G37, W123, and N173 together coordinate L-aspartate. Residue K234 is modified to N6-(pyridoxal phosphate)lysine. Residue R353 coordinates L-aspartate.

The protein belongs to the class-I pyridoxal-phosphate-dependent aminotransferase family. In terms of assembly, homodimer. It depends on pyridoxal 5'-phosphate as a cofactor.

Its subcellular location is the cytoplasm. It catalyses the reaction L-aspartate + 2-oxoglutarate = oxaloacetate + L-glutamate. The protein is Aspartate aminotransferase (aspC) of Thermotoga maritima (strain ATCC 43589 / DSM 3109 / JCM 10099 / NBRC 100826 / MSB8).